The following is a 312-amino-acid chain: Acetaldehyde dehydrogenase 2 (312 aa).

Residue 11–14 (SGNI) coordinates NAD(+). The Acyl-thioester intermediate role is filled by C129. Residues 160-168 (SAGPGTRAN) and N287 each bind NAD(+).

Belongs to the acetaldehyde dehydrogenase family.

It catalyses the reaction acetaldehyde + NAD(+) + CoA = acetyl-CoA + NADH + H(+). The sequence is that of Acetaldehyde dehydrogenase 2 from Novosphingobium aromaticivorans (strain ATCC 700278 / DSM 12444 / CCUG 56034 / CIP 105152 / NBRC 16084 / F199).